Reading from the N-terminus, the 162-residue chain is Shikimate kinase (162 aa).

Gly-11–Ser-16 is a binding site for ATP. Mg(2+) is bound at residue Ser-15. Asp-33, Arg-57, and Gly-80 together coordinate substrate. Position 116 (Arg-116) interacts with ATP. Residue Arg-132 participates in substrate binding.

This sequence belongs to the shikimate kinase family. In terms of assembly, monomer. It depends on Mg(2+) as a cofactor.

It is found in the cytoplasm. The catalysed reaction is shikimate + ATP = 3-phosphoshikimate + ADP + H(+). It functions in the pathway metabolic intermediate biosynthesis; chorismate biosynthesis; chorismate from D-erythrose 4-phosphate and phosphoenolpyruvate: step 5/7. Its function is as follows. Catalyzes the specific phosphorylation of the 3-hydroxyl group of shikimic acid using ATP as a cosubstrate. The polypeptide is Shikimate kinase (Helicobacter pylori (strain Shi470)).